The sequence spans 139 residues: Putative pre-16S rRNA nuclease (139 aa).

This sequence belongs to the YqgF nuclease family.

The protein localises to the cytoplasm. In terms of biological role, could be a nuclease involved in processing of the 5'-end of pre-16S rRNA. In Streptococcus gordonii (strain Challis / ATCC 35105 / BCRC 15272 / CH1 / DL1 / V288), this protein is Putative pre-16S rRNA nuclease.